The primary structure comprises 100 residues: Urease subunit gamma (100 aa).

It belongs to the urease gamma subunit family. Heterotrimer of UreA (gamma), UreB (beta) and UreC (alpha) subunits. Three heterotrimers associate to form the active enzyme.

It is found in the cytoplasm. The enzyme catalyses urea + 2 H2O + H(+) = hydrogencarbonate + 2 NH4(+). It functions in the pathway nitrogen metabolism; urea degradation; CO(2) and NH(3) from urea (urease route): step 1/1. In Ruegeria sp. (strain TM1040) (Silicibacter sp.), this protein is Urease subunit gamma.